Consider the following 253-residue polypeptide: uncharacterized protein (253 aa).

A compositionally biased stretch (basic and acidic residues) spans Thr200–Pro209. 2 disordered regions span residues Thr200 to Ala225 and Gln234 to Thr253.

In terms of tissue distribution, most abundantly expressed in gastrointestinal tissues. Expressed at lower levels in kidney and placenta. Expressed in fetal brain, liver, placenta, kidney and lung.

This is an uncharacterized protein from Homo sapiens (Human).